Reading from the N-terminus, the 501-residue chain is Membrane-bound lytic murein transglycosylase F (501 aa).

The signal sequence occupies residues 1–29; it reads MTKILLNTASTVLTRLWKLSLLGLVFAVA. The interval 30 to 274 is non-LT domain; that stretch reads AATLVSSRIP…DAMETFYGHL (245 aa). The LT domain stretch occupies residues 275–501; sequence GEIDYSGAIL…VKSISGTSSL (227 aa). The active site involves E321.

This sequence in the N-terminal section; belongs to the bacterial solute-binding protein 3 family. It in the C-terminal section; belongs to the transglycosylase Slt family.

The protein resides in the cell outer membrane. The catalysed reaction is Exolytic cleavage of the (1-&gt;4)-beta-glycosidic linkage between N-acetylmuramic acid (MurNAc) and N-acetylglucosamine (GlcNAc) residues in peptidoglycan, from either the reducing or the non-reducing ends of the peptidoglycan chains, with concomitant formation of a 1,6-anhydrobond in the MurNAc residue.. In terms of biological role, murein-degrading enzyme that degrades murein glycan strands and insoluble, high-molecular weight murein sacculi, with the concomitant formation of a 1,6-anhydromuramoyl product. Lytic transglycosylases (LTs) play an integral role in the metabolism of the peptidoglycan (PG) sacculus. Their lytic action creates space within the PG sacculus to allow for its expansion as well as for the insertion of various structures such as secretion systems and flagella. This chain is Membrane-bound lytic murein transglycosylase F, found in Saccharophagus degradans (strain 2-40 / ATCC 43961 / DSM 17024).